The following is an 822-amino-acid chain: BDNF/NT-3 growth factors receptor (822 aa).

The N-terminal stretch at 1–31 (MSSWIRWHGPAMARLWGFCWLVVGFWRAAFA) is a signal peptide. 2 disulfide bridges follow: Cys-32-Cys-38 and Cys-36-Cys-45. In terms of domain architecture, LRRNT spans 32–61 (CPTSCKCSASRIWCSDPSPGIVAFPRLEPN). Residues 32-430 (CPTSCKCSAS…DVTDKTGREH (399 aa)) lie on the Extracellular side of the membrane. Asn-67, Asn-95, and Asn-121 each carry an N-linked (GlcNAc...) asparagine glycan. 2 LRR repeats span residues 92-113 (GLRN…AFLK) and 116-137 (NLQH…HFRH). The LRRCT domain maps to 148-196 (NPFTCSCDIMWIKTLQEAKSSPDTQDLYCLNESSKNIPLANLQIPNCGL). 2 disulfide bridges follow: Cys-152/Cys-176 and Cys-154/Cys-194. Residues Asn-178, Asn-205, Asn-241, Asn-254, Asn-280, Asn-325, Asn-338, and Asn-412 are each glycosylated (N-linked (GlcNAc...) asparagine). Ig-like C2-type domains follow at residues 197-282 (PSAN…VNLT) and 295-365 (PTSD…IAKN). A disulfide bridge connects residues Cys-218 and Cys-266. A disulfide bridge connects residues Cys-302 and Cys-345. The chain crosses the membrane as a helical span at residues 431 to 454 (LSVYAVVVIASVVGFCLLVMLFLL). Residues 455–466 (KLARHSKFGMKG) form an interaction with MAPK8IP3/JIP3 region. The Cytoplasmic portion of the chain corresponds to 455 to 822 (KLARHSKFGM…ASPVYLDILG (368 aa)). The segment at 475–498 (DDSASPLHHISNGSNTPSSSEGGP) is disordered. Residues 485–495 (SNGSNTPSSSE) are compositionally biased toward polar residues. Residue Tyr-516 is modified to Phosphotyrosine; by autocatalysis. In terms of domain architecture, Protein kinase spans 538 to 807 (IVLKRELGEG…KNIKGIHTLL (270 aa)). Residues 544-552 (LGEGAFGKV) and Lys-572 contribute to the ATP site. Catalysis depends on Asp-676, which acts as the Proton acceptor. Phosphotyrosine; by autocatalysis occurs at positions 702, 706, 707, and 817.

This sequence belongs to the protein kinase superfamily. Tyr protein kinase family. Insulin receptor subfamily. Exists in a dynamic equilibrium between monomeric (low affinity) and dimeric (high affinity) structures. Interacts (phosphorylated upon activation by BDNF) with SHC1; mediates SHC1 phosphorylation and activation. Interacts (phosphorylated upon activation by BDNF) with PLCG1 and/or PLCG2; mediates PLCG1 phosphorylation and activation. Interacts with SH2B1 and SH2B2. Interacts with NGFR; may regulate the ligand specificity of the receptor. Interacts with SORCS2; this interaction is important for normal targeting to post-synaptic densities in response to high-frequency stimulation. Interacts (phosphorylated upon ligand-binding) with SH2D1A; regulates NTRK2. Interacts with SQSTM1 and KIDINS220. Interacts (phosphorylated upon ligand-binding) with FRS2; activates the MAPK signaling pathway. Interacts with APPL1. Interacts with MAPK8IP3/JIP3 and KLC1; interaction with KLC1 is mediated by MAPK8IP3/JIP3. Interacts with SORL1; this interaction facilitates NTRK2 trafficking between synaptic plasma membranes, postsynaptic densities and cell soma, hence positively regulates BDNF signaling. Interacts with SLITRK2. In terms of processing, phosphorylated. Undergoes ligand-mediated autophosphorylation that is required for interaction with SHC1 and PLCG1 and other downstream effectors. Isoform TrkB-T-Shc is not phosphorylated. Ubiquitinated. Undergoes polyubiquitination upon activation; regulated by NGFR. Ubiquitination regulates the internalization of the receptor. As to expression, isoform TrkB is expressed in the central and peripheral nervous system. In the central nervous system (CNS), expression is observed in the cerebral cortex, hippocampus, thalamus, choroid plexus, granular layer of the cerebellum, brain stem, and spinal cord. In the peripheral nervous system, it is expressed in many cranial ganglia, the ophthalmic nerve, the vestibular system, multiple facial structures, the submaxillary glands, and dorsal root ganglia. Isoform TrkB-T1 is mainly expressed in the brain but also detected in other tissues including pancreas, kidney and heart. Isoform TrkB-T-Shc is predominantly expressed in the brain.

Its subcellular location is the cell membrane. It localises to the endosome membrane. It is found in the early endosome membrane. The protein localises to the cell projection. The protein resides in the axon. Its subcellular location is the dendrite. It localises to the cytoplasm. It is found in the perinuclear region. The protein localises to the postsynaptic density. The catalysed reaction is L-tyrosyl-[protein] + ATP = O-phospho-L-tyrosyl-[protein] + ADP + H(+). With respect to regulation, the neuronal activity and the influx of calcium positively regulate the kinase activity and the internalization of the receptor which are both important for active signaling. Regulated by NGFR that may control the internalization of the receptor. NGFR may also stimulate the activation by BDNF compared to NTF3 and NTF4. SH2D1A inhibits the autophosphorylation of the receptor, and alters the recruitment and activation of downstream effectors and signaling cascades. The formation of active receptors dimers able to fully transduce the ligand-mediated signal, may be negatively regulated by the formation of inactive heterodimers with the non-catalytic isoforms. In terms of biological role, receptor tyrosine kinase involved in the development and the maturation of the central and the peripheral nervous systems through regulation of neuron survival, proliferation, migration, differentiation, and synapse formation and plasticity. Receptor for BDNF/brain-derived neurotrophic factor and NTF4/neurotrophin-4. Alternatively can also bind NTF3/neurotrophin-3 which is less efficient in activating the receptor but regulates neuron survival through NTRK2. Upon ligand-binding, undergoes homodimerization, autophosphorylation and activation. Recruits, phosphorylates and/or activates several downstream effectors including SHC1, FRS2, SH2B1, SH2B2 and PLCG1 that regulate distinct overlapping signaling cascades. Through SHC1, FRS2, SH2B1, SH2B2 activates the GRB2-Ras-MAPK cascade that regulates for instance neuronal differentiation including neurite outgrowth. Through the same effectors controls the Ras-PI3 kinase-AKT1 signaling cascade that mainly regulates growth and survival. Through PLCG1 and the downstream protein kinase C-regulated pathways controls synaptic plasticity. Thereby, plays a role in learning and memory by regulating both short term synaptic function and long-term potentiation. PLCG1 also leads to NF-Kappa-B activation and the transcription of genes involved in cell survival. Hence, it is able to suppress anoikis, the apoptosis resulting from loss of cell-matrix interactions. May also play a role in neutrophin-dependent calcium signaling in glial cells and mediate communication between neurons and glia. In Homo sapiens (Human), this protein is BDNF/NT-3 growth factors receptor (NTRK2).